Here is a 377-residue protein sequence, read N- to C-terminus: Phosphatidylglycerol--prolipoprotein diacylglyceryl transferase (377 aa).

The next 4 helical transmembrane spans lie at 18–38 (PVPL…AVVV), 48–68 (MDPA…IVGA), 93–113 (IWNG…GAWL), and 119–139 (GISL…AQAI). R141 provides a ligand contact to a 1,2-diacyl-sn-glycero-3-phospho-(1'-sn-glycerol). A run of 3 helical transmembrane segments spans residues 177-197 (QPTF…LLLV), 208-228 (LFAL…MLRI), and 238-258 (RVNI…LLVV). Residues 265 to 377 (DVSPQEQRAL…RTRVERPPAT (113 aa)) are disordered. Composition is skewed to low complexity over residues 288–297 (AAGETAGETR) and 308–344 (GVDV…DADG).

It belongs to the Lgt family.

It is found in the cell membrane. The enzyme catalyses L-cysteinyl-[prolipoprotein] + a 1,2-diacyl-sn-glycero-3-phospho-(1'-sn-glycerol) = an S-1,2-diacyl-sn-glyceryl-L-cysteinyl-[prolipoprotein] + sn-glycerol 1-phosphate + H(+). It functions in the pathway protein modification; lipoprotein biosynthesis (diacylglyceryl transfer). Its function is as follows. Catalyzes the transfer of the diacylglyceryl group from phosphatidylglycerol to the sulfhydryl group of the N-terminal cysteine of a prolipoprotein, the first step in the formation of mature lipoproteins. This Frankia alni (strain DSM 45986 / CECT 9034 / ACN14a) protein is Phosphatidylglycerol--prolipoprotein diacylglyceryl transferase.